A 692-amino-acid polypeptide reads, in one-letter code: Chaperone protein dnaK1 (692 aa).

Thr197 carries the post-translational modification Phosphothreonine; by autocatalysis.

It belongs to the heat shock protein 70 family.

Acts as a chaperone. This Synechocystis sp. (strain ATCC 27184 / PCC 6803 / Kazusa) protein is Chaperone protein dnaK1 (dnaK1).